We begin with the raw amino-acid sequence, 162 residues long: ATP synthase subunit b (162 aa).

A helical transmembrane segment spans residues 10–29 (LIWTIINFAVLLWGMHRFLY).

Belongs to the ATPase B chain family. In terms of assembly, F-type ATPases have 2 components, F(1) - the catalytic core - and F(0) - the membrane proton channel. F(1) has five subunits: alpha(3), beta(3), gamma(1), delta(1), epsilon(1). F(0) has three main subunits: a(1), b(2) and c(10-14). The alpha and beta chains form an alternating ring which encloses part of the gamma chain. F(1) is attached to F(0) by a central stalk formed by the gamma and epsilon chains, while a peripheral stalk is formed by the delta and b chains.

The protein localises to the cell membrane. Functionally, f(1)F(0) ATP synthase produces ATP from ADP in the presence of a proton or sodium gradient. F-type ATPases consist of two structural domains, F(1) containing the extramembraneous catalytic core and F(0) containing the membrane proton channel, linked together by a central stalk and a peripheral stalk. During catalysis, ATP synthesis in the catalytic domain of F(1) is coupled via a rotary mechanism of the central stalk subunits to proton translocation. Its function is as follows. Component of the F(0) channel, it forms part of the peripheral stalk, linking F(1) to F(0). The polypeptide is ATP synthase subunit b (Symbiobacterium thermophilum (strain DSM 24528 / JCM 14929 / IAM 14863 / T)).